Consider the following 231-residue polypeptide: Large ribosomal subunit protein uL1 (231 aa).

This sequence belongs to the universal ribosomal protein uL1 family. In terms of assembly, part of the 50S ribosomal subunit.

Functionally, binds directly to 23S rRNA. The L1 stalk is quite mobile in the ribosome, and is involved in E site tRNA release. Its function is as follows. Protein L1 is also a translational repressor protein, it controls the translation of the L11 operon by binding to its mRNA. This chain is Large ribosomal subunit protein uL1, found in Mycoplasmopsis synoviae (strain 53) (Mycoplasma synoviae).